The sequence spans 351 residues: Pentatricopeptide repeat-containing protein At2g40240, mitochondrial (351 aa).

The transit peptide at 1–27 directs the protein to the mitochondrion; sequence MSLLRRRFVKQSVNCITFLQILAERSF. PPR repeat units lie at residues 106 to 140, 141 to 175, 176 to 210, 211 to 245, 246 to 280, and 281 to 315; these read RKNA…RLGL, TPST…SVSM, DVTA…GNSP, DSRS…GVTV, LYST…DLRL, and DSES…GLRM.

It belongs to the PPR family. P subfamily.

It localises to the mitochondrion. In Arabidopsis thaliana (Mouse-ear cress), this protein is Pentatricopeptide repeat-containing protein At2g40240, mitochondrial.